The chain runs to 875 residues: Valine--tRNA ligase (875 aa).

The 'HIGH' region motif lies at 41–51 (PNVTGSLHMGH). Positions 525–529 (KMSKS) match the 'KMSKS' region motif. Residue K528 coordinates ATP. Residues 810-875 (VDLELIKKNL…ERISITIKGL (66 aa)) adopt a coiled-coil conformation.

It belongs to the class-I aminoacyl-tRNA synthetase family. ValS type 1 subfamily. As to quaternary structure, monomer.

The protein localises to the cytoplasm. It carries out the reaction tRNA(Val) + L-valine + ATP = L-valyl-tRNA(Val) + AMP + diphosphate. Its function is as follows. Catalyzes the attachment of valine to tRNA(Val). As ValRS can inadvertently accommodate and process structurally similar amino acids such as threonine, to avoid such errors, it has a 'posttransfer' editing activity that hydrolyzes mischarged Thr-tRNA(Val) in a tRNA-dependent manner. This chain is Valine--tRNA ligase, found in Pelagibacter ubique (strain HTCC1062).